Here is a 360-residue protein sequence, read N- to C-terminus: Peptide chain release factor 1 (360 aa).

Q235 carries the post-translational modification N5-methylglutamine. Basic and acidic residues predominate over residues 280–293; sequence DKQSHEQQAKEAAT. Residues 280–300 form a disordered region; that stretch reads DKQSHEQQAKEAATRKSLIGS.

This sequence belongs to the prokaryotic/mitochondrial release factor family. Post-translationally, methylated by PrmC. Methylation increases the termination efficiency of RF1.

It is found in the cytoplasm. Its function is as follows. Peptide chain release factor 1 directs the termination of translation in response to the peptide chain termination codons UAG and UAA. The chain is Peptide chain release factor 1 from Paraburkholderia xenovorans (strain LB400).